We begin with the raw amino-acid sequence, 89 residues long: UPF0147 protein STK_04605 (89 aa).

The protein belongs to the UPF0147 family.

This Sulfurisphaera tokodaii (strain DSM 16993 / JCM 10545 / NBRC 100140 / 7) (Sulfolobus tokodaii) protein is UPF0147 protein STK_04605.